Consider the following 237-residue polypeptide: MSDSQPCSTPSTRGKSDSGYIPGDDTWTQWRNIFAILTGQMTDEGKEQFRIARDIRNEAADCKRCEDQRDYLLQYSPIIRFLSDNIRQLRGDLSSHNIYCRRCTSRKAGGFDPEYGILLCANEMKDQGHLEDTMAHEMVHAYDHLRFKVDWTDNLRHAACTEIRASSLSGECRWAREFFRRGQWKFTQQHQECVRRRAILSVRARPGCKDEAHAEKVVNEVWDSCFRDTRPFDEIYR.

Residues 1 to 13 (MSDSQPCSTPSTR) are compositionally biased toward polar residues. The disordered stretch occupies residues 1 to 23 (MSDSQPCSTPSTRGKSDSGYIPG). A divalent metal cation is bound at residue H136. E137 is a catalytic residue. An a divalent metal cation-binding site is contributed by H140.

It belongs to the peptidase M76 family.

It is found in the mitochondrion inner membrane. Has a dual role in the assembly of mitochondrial ATPase. Acts as a protease that removes N-terminal residues of mitochondrial ATPase CF(0) subunit 6 at the intermembrane space side. Also involved in the correct assembly of the membrane-embedded ATPase CF(0) particle, probably mediating association of subunit 6 with the subunit 9 ring. The chain is Mitochondrial inner membrane protease atp23 (atp23) from Aspergillus fumigatus (strain ATCC MYA-4609 / CBS 101355 / FGSC A1100 / Af293) (Neosartorya fumigata).